Reading from the N-terminus, the 106-residue chain is ATP-dependent Clp protease adapter protein ClpS (106 aa).

Basic and acidic residues predominate over residues 1 to 14 (MTDKAGDWQEHGPQ). The tract at residues 1-21 (MTDKAGDWQEHGPQVEEAPPQ) is disordered.

The protein belongs to the ClpS family. In terms of assembly, binds to the N-terminal domain of the chaperone ClpA.

Involved in the modulation of the specificity of the ClpAP-mediated ATP-dependent protein degradation. The protein is ATP-dependent Clp protease adapter protein ClpS of Alkalilimnicola ehrlichii (strain ATCC BAA-1101 / DSM 17681 / MLHE-1).